We begin with the raw amino-acid sequence, 318 residues long: UAP56-interacting factor (318 aa).

N-acetylmethionine is present on Met1. The tract at residues 1 to 25 (MNRFGTRLVGATATSSPPPKARSNE) is disordered. Position 14 is a phosphothreonine (Thr14). A phosphoserine mark is found at Ser16 and Ser23. Positions 26–44 (NLDKIDMSLDDIIKLNRKE) match the UAP56-binding motif motif. Ser61 is modified (phosphoserine). Residues 79 to 100 (GFGKTSLNRRGRVMPGKRRPNG) are disordered. The span at 85–98 (LNRRGRVMPGKRRP) shows a compositional bias: basic residues. Ser118 is subject to Phosphoserine. Lys140 is covalently cross-linked (Glycyl lysine isopeptide (Lys-Gly) (interchain with G-Cter in SUMO1)). Lys261 is covalently cross-linked (Glycyl lysine isopeptide (Lys-Gly) (interchain with G-Cter in SUMO2)).

Belongs to the UIF family. Interacts with CHTOP. Interacts with DDX39B/UAP56 and NXF1; interaction with DDX39B/UAP56 and NXF1 are mutually exclusive. Interacts with SSRP1; required for its recruitment to mRNAs. In terms of tissue distribution, expressed in a wide variety of cancer types.

The protein localises to the nucleus. Its subcellular location is the nucleoplasm. The protein resides in the nucleus speckle. Functionally, required for mRNA export from the nucleus to the cytoplasm. Acts as an adapter that uses the DDX39B/UAP56-NFX1 pathway to ensure efficient mRNA export and delivering to the nuclear pore. Associates with spliced and unspliced mRNAs simultaneously with ALYREF/THOC4. In Homo sapiens (Human), this protein is UAP56-interacting factor (FYTTD1).